Consider the following 2196-residue polypeptide: Non-reducing polyketide synthase CTB1 (2196 aa).

Residues 11–250 form an N-terminal acylcarrier protein transacylase domain (SAT) region; the sequence is AFGDQTYDCS…TRLPITAPYH (240 aa). Positions 381–814 constitute a Ketosynthase family 3 (KS3) domain; the sequence is KSPIAILAAS…GGNTCLVLED (434 aa). Active-site for beta-ketoacyl synthase activity residues include C553, H688, and H733. Residues 922–1223 are malonyl-CoA:ACP transacylase (MAT) domain; the sequence is AFTGQGSAFA…QTFASINKDK (302 aa). The segment at 1298–1611 is product template (PT) domain; the sequence is SSSIHKVITN…VPKRLMHYIV (314 aa). The segment at 1302-1441 is N-terminal hotdog fold; sequence HKVITNTITA…EKTALKSAAL (140 aa). The 307-residue stretch at 1302–1608 folds into the PKS/mFAS DH domain; sequence HKVITNTITA…LQGVPKRLMH (307 aa). The active-site Proton acceptor; for dehydratase activity is the H1335. The C-terminal hotdog fold stretch occupies residues 1460-1608; it reads TYRFSKGMIY…LQGVPKRLMH (149 aa). D1520 acts as the Proton donor; for dehydratase activity in catalysis. The segment at 1617–1666 is disordered; that stretch reads KASGPPTEKKTSSPPVEKKASAPVAPTRPAIQRKNASIPPPATQVTPQNK. Positions 1623-1636 are enriched in basic and acidic residues; sequence TEKKTSSPPVEKKA. 2 consecutive Carrier domains span residues 1671 to 1748 and 1775 to 1857; these read PSVS…TRLS and DPSP…SGST. 2 positions are modified to O-(pantetheine 4'-phosphoryl)serine: S1708 and S1816. The segment covering 1856 to 1867 has biased composition (polar residues); it reads STESFDSTTTKP. Residues 1856-1923 form a disordered region; that stretch reads STESFDSTTT…PPKGRIPPAW (68 aa). The span at 1872–1887 shows a compositional bias: low complexity; the sequence is ATPPLTDSSASSPPSS. Residues 1937-2187 form a thioesterase (TE) domain region; sequence ILFLFPDGAG…SGAQMLVEHM (251 aa).

Requires pantetheine 4'-phosphate as cofactor.

It carries out the reaction 6 malonyl-CoA + acetyl-CoA + 6 H(+) = nor-toralactone + 6 CO2 + 7 CoA + 2 H2O. It participates in mycotoxin biosynthesis. In terms of biological role, polyketide synthase; part of the gene cluster that mediates the biosynthesis of cercosporin, a light-activated, non-host-selective toxin. The perylenequinone chromophore of cercosporin absorbs light energy to attain an electronically-activated triplet state and produces active oxygen species such as the hydroxyl radical, superoxide, hydrogen peroxide or singlet oxygen upon reaction with oxygen molecules. These reactive oxygen species cause damage to various cellular components including lipids, proteins and nucleic acids. The first step of cercosporin biosynthesis is performed by the polyketide synthase CTB1 which catalyzes the formation of nor-toralactone. The starter unit acyltransferase (SAT) domain of CTB1 initiates polyketide extension by the selective utilization of acetyl-CoA, which is elongated to the heptaketide in the beta-ketoacyl synthase (KS) domain by successive condensations with six malonyl units introduced by the malonyl acyltransferase (MAT) domain. The product template (PT) domain catalyzes C4-C9 and C2-C11 aldol cyclizations and dehydrations to a trihydroxynaphthalene, which is thought to be delivered to the thioesterase (TE) domain for product release. The bifunctional enzyme CTB3 then methylates nor-toralactone to toralactone before conducting an unusual oxidative aromatic ring opening. The O-methyltransferase CTB2 further methylates the nascent OH-6 of the CBT3 product, blocking further oxidation at this site before the reductase CTB6 reduces the 2-oxopropyl ketone at position C7, giving naphthalene. The FAD-dependent monooxygenase CTB5 in concert with the multicopper oxidase CTB12 are responsible for homodimerization of naphthalene with CTB7 installing the dioxepine moiety, finally producing cercosporin. The fasciclin domain-containing protein CTB11 might act with CTB5 and CTB12 whereas the roles of CTB9 and CTB10 have still to be elucidated. The sequence is that of Non-reducing polyketide synthase CTB1 from Cercospora nicotianae (Barn spot disease fungus).